Here is a 303-residue protein sequence, read N- to C-terminus: Lipoyl synthase (303 aa).

C40, C45, C51, C67, C71, C74, and S280 together coordinate [4Fe-4S] cluster. The Radical SAM core domain maps to 53–269; that stretch reads AVRKTATFMI…KEIALSKGFS (217 aa).

Belongs to the radical SAM superfamily. Lipoyl synthase family. Requires [4Fe-4S] cluster as cofactor.

It is found in the cytoplasm. The enzyme catalyses [[Fe-S] cluster scaffold protein carrying a second [4Fe-4S](2+) cluster] + N(6)-octanoyl-L-lysyl-[protein] + 2 oxidized [2Fe-2S]-[ferredoxin] + 2 S-adenosyl-L-methionine + 4 H(+) = [[Fe-S] cluster scaffold protein] + N(6)-[(R)-dihydrolipoyl]-L-lysyl-[protein] + 4 Fe(3+) + 2 hydrogen sulfide + 2 5'-deoxyadenosine + 2 L-methionine + 2 reduced [2Fe-2S]-[ferredoxin]. The protein operates within protein modification; protein lipoylation via endogenous pathway; protein N(6)-(lipoyl)lysine from octanoyl-[acyl-carrier-protein]. Functionally, catalyzes the radical-mediated insertion of two sulfur atoms into the C-6 and C-8 positions of the octanoyl moiety bound to the lipoyl domains of lipoate-dependent enzymes, thereby converting the octanoylated domains into lipoylated derivatives. The polypeptide is Lipoyl synthase (Halalkalibacterium halodurans (strain ATCC BAA-125 / DSM 18197 / FERM 7344 / JCM 9153 / C-125) (Bacillus halodurans)).